We begin with the raw amino-acid sequence, 402 residues long: Elongation factor Tu (402 aa).

A tr-type G domain is found at lysine 16–valine 211. The tract at residues glycine 25–threonine 32 is G1. Glycine 25–threonine 32 is a GTP binding site. Threonine 32 is a Mg(2+) binding site. Residues glycine 66 to asparagine 70 form a G2 region. The tract at residues aspartate 87–glycine 90 is G3. GTP contacts are provided by residues aspartate 87–histidine 91 and asparagine 142–aspartate 145. Positions asparagine 142–aspartate 145 are G4. Residues serine 181–arginine 183 are G5.

The protein belongs to the TRAFAC class translation factor GTPase superfamily. Classic translation factor GTPase family. EF-Tu/EF-1A subfamily. Monomer.

Its subcellular location is the cytoplasm. The enzyme catalyses GTP + H2O = GDP + phosphate + H(+). Functionally, GTP hydrolase that promotes the GTP-dependent binding of aminoacyl-tRNA to the A-site of ribosomes during protein biosynthesis. The sequence is that of Elongation factor Tu from Mesomycoplasma hyopneumoniae (strain J / ATCC 25934 / NCTC 10110) (Mycoplasma hyopneumoniae).